A 283-amino-acid chain; its full sequence is uncharacterized protein (283 aa).

Residue tyrosine 55 is the Proton donor of the active site.

It belongs to the aldo/keto reductase family.

It localises to the cytoplasm. The protein localises to the nucleus. This is an uncharacterized protein from Schizosaccharomyces pombe (strain 972 / ATCC 24843) (Fission yeast).